The following is a 720-amino-acid chain: 1-deoxy-D-xylulose-5-phosphate synthase 1, chloroplastic (720 aa).

Residues 1-51 (MALTTFSISRGGFVGALPQEGHFAPAAAELSLHKLQSRPHKARRRSSSSIS) constitute a chloroplast transit peptide. Residues 35 to 46 (LQSRPHKARRRS) show a composition bias toward basic residues. Residues 35 to 74 (LQSRPHKARRRSSSSISASLSTEREAAEYHSQRPPTPLLD) are disordered. Positions 56-65 (TEREAAEYHS) are enriched in basic and acidic residues. Thiamine diphosphate is bound by residues histidine 142 and 183-185 (GHS). Aspartate 214 contributes to the Mg(2+) binding site. Thiamine diphosphate contacts are provided by residues 215 to 216 (GA), asparagine 243, tyrosine 364, and glutamate 446. Asparagine 243 is a Mg(2+) binding site.

Belongs to the transketolase family. DXPS subfamily. In terms of assembly, homodimer. Mg(2+) is required as a cofactor. Thiamine diphosphate serves as cofactor.

The protein resides in the plastid. Its subcellular location is the chloroplast stroma. It catalyses the reaction D-glyceraldehyde 3-phosphate + pyruvate + H(+) = 1-deoxy-D-xylulose 5-phosphate + CO2. It participates in metabolic intermediate biosynthesis; 1-deoxy-D-xylulose 5-phosphate biosynthesis; 1-deoxy-D-xylulose 5-phosphate from D-glyceraldehyde 3-phosphate and pyruvate: step 1/1. Catalyzes the acyloin condensation reaction between C atoms 2 and 3 of pyruvate and glyceraldehyde 3-phosphate to yield 1-deoxy-D-xylulose-5-phosphate (DXP). Is a limiting enzyme for plastidic isoprenoid biosynthesis and essential for chloroplast development. This Oryza sativa subsp. japonica (Rice) protein is 1-deoxy-D-xylulose-5-phosphate synthase 1, chloroplastic (CLA1).